A 1048-amino-acid polypeptide reads, in one-letter code: Protein argonaute 7 (1048 aa).

The segment covering 1–14 has biased composition (basic and acidic residues); that stretch reads MEGEREGVVAKNED. Disordered regions lie at residues 1–50 and 121–141; these read MEGE…GSSG and KAAD…KKPP. Gly residues predominate over residues 16 to 37; sequence AGGGGGGLGTGGNGGGGGGGSA. A compositionally biased stretch (basic residues) spans 131 to 141; sequence MWKHRPSKKPP. The 109-residue stretch at 422-530 folds into the PAZ domain; that stretch reads KRCDFLKDLP…VPMELCVVCE (109 aa). The Piwi domain maps to 709 to 1017; sequence LLICVMERRH…AAYRGRLYLE (309 aa).

The protein belongs to the argonaute family. Ago subfamily. Expressed in the reproductive shoot apex.

Functionally, involved in the RNA silencing pathway. May bind to short RNAs such as microRNAs (miRNAs) or short interfering RNAs (siRNAs), and represses the translation of mRNAs which are complementary to them. Regulates shoot apical meristem (SAM) initiation and maintenance and leaf polarization through the trans-acting siRNAS (ta-siRNAs) pathway which probably modulates the expression of the ARF2, ARF3, ARF4, ARF14 and ARF15 genes. The protein is Protein argonaute 7 (AGO7) of Oryza sativa subsp. japonica (Rice).